The sequence spans 352 residues: B1 bradykinin receptor (352 aa).

Topologically, residues 1–41 (MAAQTLLELQPSNQSQLSALNTTSCDNAREAWDLLYQVLPI) are extracellular. N-linked (GlcNAc...) asparagine glycosylation is found at asparagine 13 and asparagine 21. A helical membrane pass occupies residues 42-62 (FILTICAFGLLGNLFVLSVFL). Topologically, residues 63–72 (LLRRRLTVAE) are cytoplasmic. A helical transmembrane segment spans residues 73-93 (IYLVNLAASDLVFVLGLPFWA). Topologically, residues 94–110 (QNIWNQFNWPFGDLLCR) are extracellular. An intrachain disulfide couples cysteine 109 to cysteine 188. Residues 111-131 (VVNGVIKANLFISIFLMVAIS) form a helical membrane-spanning segment. Topologically, residues 132–153 (QDRYCVLVHPMASRRRRRRRRA) are cytoplasmic. Residues 154-174 (RATCMVIWAVGALLSTPTFLL) form a helical membrane-spanning segment. The Extracellular portion of the chain corresponds to 175-206 (RSVSAVQDLNISACILLLPHQAWHVARIVELN). N-linked (GlcNAc...) asparagine glycosylation occurs at asparagine 184. Residues 207-227 (VLGFLLPLAAIIFFNGHILAS) form a helical membrane-spanning segment. Over 228 to 250 (LRGQGEVSQTRIGGPKDCKTTVL) the chain is Cytoplasmic. The chain crosses the membrane as a helical span at residues 251–271 (ILTLVAAFLVCWAPYHCFAFL). At 272–294 (EFLFQVRAVRGCFWEDFIDLGLQ) the chain is on the extracellular side. A helical membrane pass occupies residues 295 to 315 (LANFFAFTNSCLNPVIYVFVG). Residues 316 to 326 (RLFRTKVWELY) lie on the Cytoplasmic side of the membrane. Cysteine 329 carries the S-palmitoyl cysteine lipid modification.

The protein belongs to the G-protein coupled receptor 1 family. Bradykinin receptor subfamily. BDKRB1 sub-subfamily.

The protein localises to the cell membrane. Its function is as follows. This is a receptor for bradykinin. Could be a factor in chronic pain and inflammation. The polypeptide is B1 bradykinin receptor (BDKRB1) (Tupaia minor (Pigmy tree shrew)).